The following is a 179-amino-acid chain: MNNVEISRDECKAMSHGLYCRVASDAQLQRAGWLVQFAVVPRKGQKQLAANWPFYLVLHRALRNGPEFVGFLLFAAREIEQIRTRLGSGFRKTLVVGNDHFNKYIKYNGKTIVWCDVLCGTVVPKDSSHCPDVGLETLVPGTVLSGSQFATLSQNIGMALRGNCRCHLRDVCMVHQEVS.

This is an uncharacterized protein from Mushroom bacilliform virus (isolate Australia/AUS LF-1) (MBV).